The chain runs to 502 residues: Cytochrome P450 81D1 (502 aa).

A helical membrane pass occupies residues 6–26; sequence IRVVLYSIFSLIFLIISFKFL. Heme is bound at residue cysteine 440.

The protein belongs to the cytochrome P450 family. The cofactor is heme.

The protein localises to the membrane. This chain is Cytochrome P450 81D1 (CYP81D1), found in Arabidopsis thaliana (Mouse-ear cress).